A 427-amino-acid polypeptide reads, in one-letter code: Tol-Pal system protein TolB (427 aa).

An N-terminal signal peptide occupies residues 1–27 (MPVSLLRALLVFSLLCLGLSATRAAHA).

Belongs to the TolB family. In terms of assembly, the Tol-Pal system is composed of five core proteins: the inner membrane proteins TolA, TolQ and TolR, the periplasmic protein TolB and the outer membrane protein Pal. They form a network linking the inner and outer membranes and the peptidoglycan layer.

The protein localises to the periplasm. Part of the Tol-Pal system, which plays a role in outer membrane invagination during cell division and is important for maintaining outer membrane integrity. This chain is Tol-Pal system protein TolB, found in Thiobacillus denitrificans (strain ATCC 25259 / T1).